Reading from the N-terminus, the 313-residue chain is Sideroflexin-4 (313 aa).

Transmembrane regions (helical) follow at residues 87 to 107 (AALL…VKSL), 141 to 161 (LLLG…PRLL), 175 to 191 (FIPV…NVIA), 230 to 247 (VVLF…AYFF), and 269 to 289 (VLVM…IGRI).

Belongs to the sideroflexin family.

Its subcellular location is the mitochondrion inner membrane. In terms of biological role, mitochondrial amino-acid transporter. Does not act as a serine transporter: not able to mediate transport of serine into mitochondria. This chain is Sideroflexin-4, found in Bos taurus (Bovine).